Reading from the N-terminus, the 241-residue chain is Triosephosphate isomerase (241 aa).

8–10 (NWK) contributes to the substrate binding site. His93 acts as the Electrophile in catalysis. Catalysis depends on Glu163, which acts as the Proton acceptor. Residues Gly169, Ser205, and 226–227 (GG) contribute to the substrate site.

It belongs to the triosephosphate isomerase family. Homodimer.

The protein localises to the cytoplasm. It catalyses the reaction D-glyceraldehyde 3-phosphate = dihydroxyacetone phosphate. The protein operates within carbohydrate biosynthesis; gluconeogenesis. Its pathway is carbohydrate degradation; glycolysis; D-glyceraldehyde 3-phosphate from glycerone phosphate: step 1/1. In terms of biological role, involved in the gluconeogenesis. Catalyzes stereospecifically the conversion of dihydroxyacetone phosphate (DHAP) to D-glyceraldehyde-3-phosphate (G3P). This chain is Triosephosphate isomerase, found in Bdellovibrio bacteriovorus (strain ATCC 15356 / DSM 50701 / NCIMB 9529 / HD100).